Consider the following 232-residue polypeptide: Large ribosomal subunit protein uL1 (232 aa).

This sequence belongs to the universal ribosomal protein uL1 family. As to quaternary structure, part of the 50S ribosomal subunit.

Functionally, binds directly to 23S rRNA. The L1 stalk is quite mobile in the ribosome, and is involved in E site tRNA release. Protein L1 is also a translational repressor protein, it controls the translation of the L11 operon by binding to its mRNA. The chain is Large ribosomal subunit protein uL1 from Xylella fastidiosa (strain M23).